The sequence spans 407 residues: Phosphopentomutase (407 aa).

Asp-10, Asp-306, His-311, Asp-347, His-348, and His-359 together coordinate Mn(2+).

It belongs to the phosphopentomutase family. Mn(2+) is required as a cofactor.

The protein resides in the cytoplasm. It carries out the reaction 2-deoxy-alpha-D-ribose 1-phosphate = 2-deoxy-D-ribose 5-phosphate. It catalyses the reaction alpha-D-ribose 1-phosphate = D-ribose 5-phosphate. It participates in carbohydrate degradation; 2-deoxy-D-ribose 1-phosphate degradation; D-glyceraldehyde 3-phosphate and acetaldehyde from 2-deoxy-alpha-D-ribose 1-phosphate: step 1/2. In terms of biological role, isomerase that catalyzes the conversion of deoxy-ribose 1-phosphate (dRib-1-P) and ribose 1-phosphate (Rib-1-P) to deoxy-ribose 5-phosphate (dRib-5-P) and ribose 5-phosphate (Rib-5-P), respectively. This is Phosphopentomutase from Pectobacterium carotovorum subsp. carotovorum (strain PC1).